The primary structure comprises 345 residues: Protein SHI RELATED SEQUENCE 7 (345 aa).

The disordered stretch occupies residues 7–28 (LGGRDHNKQDHHQEKDHNEDKS). Over residues 9–28 (GRDHNKQDHHQEKDHNEDKS) the composition is skewed to basic and acidic residues. Positions 119, 122, 130, 135, 139, and 146 each coordinate Zn(2+). The zn(2)-C6 fungal-type; degenerate DNA-binding region spans 119-146 (CQDCGNQAKKDCPHMRCRTCCKSRGFDC). Residues 168-200 (AVLPAKRIRDANSRGGGDDDDDDKEDEKNDSCG) form a disordered region. The Required for homo- and heterodimerization motif lies at 256-259 (IGGH).

Belongs to the SHI protein family. In terms of tissue distribution, mainly expressed in the filaments of flowers, the shoot apex regions and pollen. Also present in leaves.

It localises to the nucleus. Transcription activator that binds DNA on 5'-ACTCTAC-3' and promotes auxin homeostasis-regulating gene expression (e.g. YUC genes), as well as genes affecting stamen development, cell expansion and timing of flowering. Synergistically with other SHI-related proteins, regulates gynoecium, stamen and leaf development in a dose-dependent manner, controlling apical-basal patterning. Promotes style and stigma formation, and influences vascular development during gynoecium development. May also have a role in the formation and/or maintenance of the shoot apical meristem (SAM). Regulates anther dehiscence and floral development. This Arabidopsis thaliana (Mouse-ear cress) protein is Protein SHI RELATED SEQUENCE 7 (SRS7).